The chain runs to 365 residues: Chorismate synthase (365 aa).

NADP(+)-binding residues include R48 and R54. Residues 125–127 (RSS), 238–239 (NA), G278, 293–297 (KPTSS), and R319 contribute to the FMN site.

Belongs to the chorismate synthase family. As to quaternary structure, homotetramer. The cofactor is FMNH2.

It catalyses the reaction 5-O-(1-carboxyvinyl)-3-phosphoshikimate = chorismate + phosphate. The protein operates within metabolic intermediate biosynthesis; chorismate biosynthesis; chorismate from D-erythrose 4-phosphate and phosphoenolpyruvate: step 7/7. In terms of biological role, catalyzes the anti-1,4-elimination of the C-3 phosphate and the C-6 proR hydrogen from 5-enolpyruvylshikimate-3-phosphate (EPSP) to yield chorismate, which is the branch point compound that serves as the starting substrate for the three terminal pathways of aromatic amino acid biosynthesis. This reaction introduces a second double bond into the aromatic ring system. In Janthinobacterium sp. (strain Marseille) (Minibacterium massiliensis), this protein is Chorismate synthase.